Here is a 449-residue protein sequence, read N- to C-terminus: Phosphoglucosamine mutase (449 aa).

S100 functions as the Phosphoserine intermediate in the catalytic mechanism. The Mg(2+) site is built by S100, D241, D243, and D245. S100 is subject to Phosphoserine.

This sequence belongs to the phosphohexose mutase family. Mg(2+) is required as a cofactor. In terms of processing, activated by phosphorylation.

It carries out the reaction alpha-D-glucosamine 1-phosphate = D-glucosamine 6-phosphate. Functionally, catalyzes the conversion of glucosamine-6-phosphate to glucosamine-1-phosphate. In Clostridium botulinum (strain Loch Maree / Type A3), this protein is Phosphoglucosamine mutase.